Here is a 152-residue protein sequence, read N- to C-terminus: MTFTDLVIILFILALLAYAIYDQFIMPRRNGPVLLAIPLLRRSRVDGMIFVGLTAILIYNNITQHGTAITTWLLSVLALMGLYLFWIRTPKIIFKPRGFFFANVWIEYQRIKEMNLSEDGVLVMQLEQRRLLIRVRNIDDLEKIYKLLITTQ.

3 consecutive transmembrane segments (helical) span residues 6-26 (LVII…QFIM), 45-65 (VDGM…ITQH), and 67-87 (TAIT…LFWI).

This sequence belongs to the UPF0266 family.

The protein localises to the cell inner membrane. In Klebsiella pneumoniae subsp. pneumoniae (strain ATCC 700721 / MGH 78578), this protein is UPF0266 membrane protein KPN78578_23010.